The sequence spans 345 residues: uncharacterized protein (345 aa).

Transmembrane regions (helical) follow at residues 9–31, 84–103, 116–138, 148–170, 182–204, 269–286, 291–308, and 313–335; these read VVAF…AAFV, TLVA…TYLL, YFSL…ILYT, VPMQ…SGIF, VVFV…TIHA, WFFW…GVLG, ISHY…IAGY, and HGLT…VFFI.

The protein localises to the cell membrane. This is an uncharacterized protein from Treponema pallidum (strain Nichols).